A 154-amino-acid polypeptide reads, in one-letter code: Protein aau3 (154 aa).

Residues Arg-2–Lys-132 form the HTH rrf2-type domain. Residues Cys-91, Cys-99, and Cys-105 each coordinate [2Fe-2S] cluster.

Requires [2Fe-2S] cluster as cofactor.

Required for growth utilizing PHB cycle intermediates. This is Protein aau3 (aau3) from Rhizobium meliloti (strain 1021) (Ensifer meliloti).